The following is a 348-amino-acid chain: Hereditary hemochromatosis protein homolog (348 aa).

The signal sequence occupies residues 1–22 (MGPRARPALFFLILLRTVAAQG). The segment at 23–114 (RPPRSHSLRY…IMDNHNHSKE (92 aa)) is alpha-1. The Extracellular portion of the chain corresponds to 23–306 (RPPRSHSLRY…WEPSLSNTLV (284 aa)). Asn-110, Asn-130, and Asn-234 each carry an N-linked (GlcNAc...) asparagine glycan. The alpha-2 stretch occupies residues 115 to 205 (SHTLQVILGC…ELGRGVLDQQ (91 aa)). Intrachain disulfides connect Cys-124/Cys-187 and Cys-225/Cys-282. An alpha-3 region spans residues 206 to 297 (VPPLVKVTHH…GLDQPLTATW (92 aa)). One can recognise an Ig-like C1-type domain in the interval 207–296 (PPLVKVTHHV…PGLDQPLTAT (90 aa)). The tract at residues 298-306 (EPSLSNTLV) is connecting peptide. A helical membrane pass occupies residues 307 to 330 (TGVISGIAVCVIIFFIGILFRILR). Residues 331 to 348 (KRQASRGAMGDYVLGECE) lie on the Cytoplasmic side of the membrane.

Belongs to the MHC class I family. In terms of assembly, binds TFR through the extracellular domain in a pH-dependent manner.

It localises to the cell membrane. Binds to transferrin receptor (TFR) and reduces its affinity for iron-loaded transferrin. This chain is Hereditary hemochromatosis protein homolog (HFE), found in Ceratotherium simum (White rhinoceros).